The following is a 146-amino-acid chain: Anti-sigma F factor (146 aa).

The protein belongs to the anti-sigma-factor family.

It catalyses the reaction L-seryl-[protein] + ATP = O-phospho-L-seryl-[protein] + ADP + H(+). The enzyme catalyses L-threonyl-[protein] + ATP = O-phospho-L-threonyl-[protein] + ADP + H(+). Functionally, binds to sigma F and blocks its ability to form an RNA polymerase holoenzyme (E-sigma F). Phosphorylates SpoIIAA on a serine residue. This phosphorylation may enable SpoIIAA to act as an anti-anti-sigma factor that counteracts SpoIIAB and thus releases sigma F from inhibition. The polypeptide is Anti-sigma F factor (Bacillus cereus (strain G9842)).